Consider the following 97-residue polypeptide: Large ribosomal subunit protein uL23 (97 aa).

This sequence belongs to the universal ribosomal protein uL23 family. As to quaternary structure, part of the 50S ribosomal subunit. Contacts protein L29, and trigger factor when it is bound to the ribosome.

Functionally, one of the early assembly proteins it binds 23S rRNA. One of the proteins that surrounds the polypeptide exit tunnel on the outside of the ribosome. Forms the main docking site for trigger factor binding to the ribosome. This Brachyspira hyodysenteriae (strain ATCC 49526 / WA1) protein is Large ribosomal subunit protein uL23.